Here is a 387-residue protein sequence, read N- to C-terminus: Protein-glutamate methylesterase/protein-glutamine glutaminase 1 (387 aa).

Residues 18-136 form the Response regulatory domain; sequence RVMVVDDSAV…EISGGTDFRH (119 aa). Position 69 is a 4-aspartylphosphate (Asp-69). A CheB-type methylesterase domain is found at 190–387; it reads PAAEERPDII…AYVLRSANKR (198 aa). Catalysis depends on residues Ser-204, His-233, and Asp-329.

Belongs to the CheB family. Post-translationally, phosphorylated by CheA. Phosphorylation of the N-terminal regulatory domain activates the methylesterase activity.

It localises to the cytoplasm. It catalyses the reaction [protein]-L-glutamate 5-O-methyl ester + H2O = L-glutamyl-[protein] + methanol + H(+). The catalysed reaction is L-glutaminyl-[protein] + H2O = L-glutamyl-[protein] + NH4(+). Involved in chemotaxis. Part of a chemotaxis signal transduction system that modulates chemotaxis in response to various stimuli. Catalyzes the demethylation of specific methylglutamate residues introduced into the chemoreceptors (methyl-accepting chemotaxis proteins or MCP) by CheR. Also mediates the irreversible deamidation of specific glutamine residues to glutamic acid. In Rhodospirillum rubrum (strain ATCC 11170 / ATH 1.1.1 / DSM 467 / LMG 4362 / NCIMB 8255 / S1), this protein is Protein-glutamate methylesterase/protein-glutamine glutaminase 1.